Reading from the N-terminus, the 230-residue chain is Uracil-DNA glycosylase (230 aa).

The active-site Proton acceptor is aspartate 70.

The protein belongs to the uracil-DNA glycosylase (UDG) superfamily. UNG family.

It is found in the cytoplasm. The enzyme catalyses Hydrolyzes single-stranded DNA or mismatched double-stranded DNA and polynucleotides, releasing free uracil.. Excises uracil residues from the DNA which can arise as a result of misincorporation of dUMP residues by DNA polymerase or due to deamination of cytosine. In Pseudomonas putida (strain W619), this protein is Uracil-DNA glycosylase.